A 463-amino-acid polypeptide reads, in one-letter code: ATP synthase subunit beta (463 aa).

153–160 lines the ATP pocket; it reads GGAGVGKT.

It belongs to the ATPase alpha/beta chains family. F-type ATPases have 2 components, CF(1) - the catalytic core - and CF(0) - the membrane proton channel. CF(1) has five subunits: alpha(3), beta(3), gamma(1), delta(1), epsilon(1). CF(0) has three main subunits: a(1), b(2) and c(9-12). The alpha and beta chains form an alternating ring which encloses part of the gamma chain. CF(1) is attached to CF(0) by a central stalk formed by the gamma and epsilon chains, while a peripheral stalk is formed by the delta and b chains.

Its subcellular location is the cell inner membrane. It catalyses the reaction ATP + H2O + 4 H(+)(in) = ADP + phosphate + 5 H(+)(out). Functionally, produces ATP from ADP in the presence of a proton gradient across the membrane. The catalytic sites are hosted primarily by the beta subunits. This chain is ATP synthase subunit beta, found in Burkholderia cepacia (Pseudomonas cepacia).